Reading from the N-terminus, the 247-residue chain is ATP synthase subunit a, chloroplastic (247 aa).

5 consecutive transmembrane segments (helical) span residues 38 to 58, 95 to 115, 134 to 154, 199 to 219, and 220 to 240; these read QVLI…TLAV, VPFI…GALL, INTT…AGIS, LVVV…VMFL, and GLFT…AYIG.

It belongs to the ATPase A chain family. F-type ATPases have 2 components, CF(1) - the catalytic core - and CF(0) - the membrane proton channel. CF(1) has five subunits: alpha(3), beta(3), gamma(1), delta(1), epsilon(1). CF(0) has four main subunits: a, b, b' and c.

The protein localises to the plastid. It is found in the chloroplast thylakoid membrane. Functionally, key component of the proton channel; it plays a direct role in the translocation of protons across the membrane. In Daucus carota (Wild carrot), this protein is ATP synthase subunit a, chloroplastic.